A 400-amino-acid chain; its full sequence is Haptoglobin (400 aa).

The signal sequence occupies residues 1–18; sequence MSALPVVVTLLLCGQLLA. Sushi domains lie at 28 to 83 and 84 to 141; these read DSCP…ECED and ASCP…ECEA. Disulfide bonds link Cys49/Cys81, Cys105/Cys139, and Cys143/Cys260. Positions 156–398 constitute a Peptidase S1 domain; sequence IIGGSLDAKG…ILDWVRKTIA (243 aa). N-linked (GlcNAc...) asparagine glycosylation is found at Asn285, Asn309, and Asn315. Disulfide bonds link Cys303–Cys334 and Cys345–Cys375. Residues 312-317 form an interaction with CD163 region; sequence VPENKT.

It belongs to the peptidase S1 family. In terms of assembly, tetramer of two alpha and two beta chains; disulfide-linked. The hemoglobin/haptoglobin complex is composed of a haptoglobin dimer bound to two hemoglobin alpha-beta dimers. Interacts with CD163. Interacts with ERGIC3. As to expression, expressed by the liver and secreted in plasma.

It is found in the secreted. The protein resides in the extracellular space. As a result of hemolysis, hemoglobin is found to accumulate in the kidney and is secreted in the urine. Haptoglobin captures, and combines with free plasma hemoglobin to allow hepatic recycling of heme iron and to prevent kidney damage. Haptoglobin also acts as an antioxidant, has antibacterial activity and plays a role in modulating many aspects of the acute phase response. Hemoglobin/haptoglobin complexes are rapidly cleared by the macrophage CD163 scavenger receptor expressed on the surface of liver Kupfer cells through an endocytic lysosomal degradation pathway. This is Haptoglobin (HP) from Cervus elaphus (Red deer).